Here is a 428-residue protein sequence, read N- to C-terminus: Ectonucleoside triphosphate diphosphohydrolase 5 (428 aa).

An N-terminal signal peptide occupies residues 1–24 (MTSSRLPVLLALVFSSLSPVLSHS). E172 (proton acceptor) is an active-site residue. N-linked (GlcNAc...) asparagine glycosylation is present at N232. 2 cysteine pairs are disulfide-bonded: C272–C303 and C363–C377.

This sequence belongs to the GDA1/CD39 NTPase family. As to quaternary structure, monomer; active form. Homodimer; disulfide-linked. Homodimers are enzymatically inactive. The cofactor is Ca(2+). It depends on Mg(2+) as a cofactor.

Its subcellular location is the endoplasmic reticulum. The protein resides in the secreted. The enzyme catalyses a ribonucleoside 5'-diphosphate + H2O = a ribonucleoside 5'-phosphate + phosphate + H(+). It catalyses the reaction GDP + H2O = GMP + phosphate + H(+). It carries out the reaction UDP + H2O = UMP + phosphate + H(+). The catalysed reaction is IDP + H2O = IMP + phosphate + H(+). The enzyme catalyses CDP + H2O = CMP + phosphate + H(+). It catalyses the reaction ADP + H2O = AMP + phosphate + H(+). It functions in the pathway protein modification; protein glycosylation. In terms of biological role, hydrolyzes nucleoside diphosphates with a preference for GDP, IDP and UDP compared to ADP and CDP. In the lumen of the endoplasmic reticulum, hydrolyzes UDP that acts as an end-product feedback inhibitor of the UDP-Glc:glycoprotein glucosyltransferases. UMP can be transported back by an UDP-sugar antiporter to the cytosol where it is consumed to regenerate UDP-glucose. Therefore, it positively regulates protein reglucosylation by clearing UDP from the ER lumen and by promoting the regeneration of UDP-glucose. Protein reglucosylation is essential to proper glycoprotein folding and quality control in the ER. This chain is Ectonucleoside triphosphate diphosphohydrolase 5 (ENTPD5), found in Gallus gallus (Chicken).